The following is a 173-amino-acid chain: Photosystem I assembly protein Ycf3 (173 aa).

TPR repeat units lie at residues 35–68, 72–105, and 120–153; these read AFSY…EEDP, SYIL…NFKL, and GVQA…APDN.

The protein belongs to the Ycf3 family.

It localises to the plastid. The protein localises to the chloroplast thylakoid membrane. Functionally, essential for the assembly of the photosystem I (PSI) complex. May act as a chaperone-like factor to guide the assembly of the PSI subunits. The polypeptide is Photosystem I assembly protein Ycf3 (Pyropia yezoensis (Susabi-nori)).